A 621-amino-acid chain; its full sequence is Chaperone protein HtpG (621 aa).

The interval 1–328 (MKQEKKKFDA…SEDLPLNISR (328 aa)) is a; substrate-binding. Positions 329-544 (ESLQHNNVLE…EAAMDIRMER (216 aa)) are b. A disordered region spans residues 479 to 498 (VDQATSSSEEKNKDDKKSDD). A compositionally biased stretch (basic and acidic residues) spans 486–498 (SEEKNKDDKKSDD). Residues 545–621 (FLIEQKQIAN…LNDIVQKAIL (77 aa)) form a c region.

This sequence belongs to the heat shock protein 90 family. In terms of assembly, homodimer.

The protein resides in the cytoplasm. Functionally, molecular chaperone. Has ATPase activity. The chain is Chaperone protein HtpG from Rickettsia bellii (strain OSU 85-389).